The following is a 250-amino-acid chain: Ribosomal RNA small subunit methyltransferase J (250 aa).

S-adenosyl-L-methionine-binding positions include 102 to 103 (RD), 118 to 119 (ER), 154 to 155 (SS), and D172.

The protein belongs to the methyltransferase superfamily. RsmJ family.

The protein resides in the cytoplasm. It catalyses the reaction guanosine(1516) in 16S rRNA + S-adenosyl-L-methionine = N(2)-methylguanosine(1516) in 16S rRNA + S-adenosyl-L-homocysteine + H(+). Its function is as follows. Specifically methylates the guanosine in position 1516 of 16S rRNA. The chain is Ribosomal RNA small subunit methyltransferase J from Edwardsiella ictaluri (strain 93-146).